We begin with the raw amino-acid sequence, 60 residues long: Large ribosomal subunit protein uL30 (60 aa).

This sequence belongs to the universal ribosomal protein uL30 family. As to quaternary structure, part of the 50S ribosomal subunit.

The protein is Large ribosomal subunit protein uL30 of Leptothrix cholodnii (strain ATCC 51168 / LMG 8142 / SP-6) (Leptothrix discophora (strain SP-6)).